A 185-amino-acid chain; its full sequence is Elongation factor P (185 aa).

It belongs to the elongation factor P family.

Its subcellular location is the cytoplasm. The protein operates within protein biosynthesis; polypeptide chain elongation. In terms of biological role, involved in peptide bond synthesis. Stimulates efficient translation and peptide-bond synthesis on native or reconstituted 70S ribosomes in vitro. Probably functions indirectly by altering the affinity of the ribosome for aminoacyl-tRNA, thus increasing their reactivity as acceptors for peptidyl transferase. The polypeptide is Elongation factor P (Paraburkholderia phymatum (strain DSM 17167 / CIP 108236 / LMG 21445 / STM815) (Burkholderia phymatum)).